A 922-amino-acid chain; its full sequence is 1,4-alpha-glucan-branching enzyme 1, chloroplastic/amyloplastic (922 aa).

The transit peptide at 1–47 directs the protein to the chloroplast; sequence MVYTISGIRFPVLPSLHKSTLRCDRRASSHSFFLKNNSSSFSRTSLY. The tract at residues 83 to 130 is disordered; the sequence is LENPDITSEDAQNLEDLTMKDGNKYNIDESTSSYREVGDEKGSVTSSS. Basic and acidic residues predominate over residues 99–109; the sequence is LTMKDGNKYNI. Catalysis depends on Asp494, which acts as the Nucleophile. The Proton donor role is filled by Glu549. Residues 870–922 form a disordered region; it reads VESEPIELSVEEAESEPIERSVEEVESETTQQSVEVESETTQQSVEVESETTQ. The segment covering 897–922 has biased composition (low complexity); the sequence is ETTQQSVEVESETTQQSVEVESETTQ.

This sequence belongs to the glycosyl hydrolase 13 family. GlgB subfamily. As to quaternary structure, monomer. In terms of tissue distribution, expressed in roots, leaves, stipules, pods and flowers.

It is found in the plastid. Its subcellular location is the chloroplast. It localises to the amyloplast. The enzyme catalyses Transfers a segment of a (1-&gt;4)-alpha-D-glucan chain to a primary hydroxy group in a similar glucan chain.. The protein operates within glycan biosynthesis; starch biosynthesis. Catalyzes the formation of the alpha-1,6-glucosidic linkages in starch by scission of a 1,4-alpha-linked oligosaccharide from growing alpha-1,4-glucan chains and the subsequent attachment of the oligosaccharide to the alpha-1,6 position. May preferentially transfer short chains during branching. Responsible for the synthesis of about 75% of the amylopectin found in the starch granules of mature embryos. The sequence is that of 1,4-alpha-glucan-branching enzyme 1, chloroplastic/amyloplastic (SBEI) from Pisum sativum (Garden pea).